A 740-amino-acid chain; its full sequence is Ribosomal protein S6 kinase alpha-6 (740 aa).

The Protein kinase 1 domain occupies 67 to 326 (FELLKVLGQG…VEEIKRHTFF (260 aa)). Residues 73–81 (LGQGSFGKV) and K99 contribute to the ATP site. The Proton acceptor role is filled by D192. Residues 327–396 (STIDWNKLYR…VAPVSLEESK (70 aa)) enclose the AGC-kinase C-terminal domain. Residues 420–677 (YELKEDIGVG…AEQVLKHSWI (258 aa)) form the Protein kinase 2 domain. ATP contacts are provided by residues 426–434 (IGVGSYSIC) and K449. Catalysis depends on D537, which acts as the Proton acceptor.

It belongs to the protein kinase superfamily. AGC Ser/Thr protein kinase family. S6 kinase subfamily. As to quaternary structure, forms a complex with either ERK1 or ERK2 in quiescent cells. Transiently dissociates following mitogenic stimulation. Mg(2+) serves as cofactor.

The enzyme catalyses L-seryl-[protein] + ATP = O-phospho-L-seryl-[protein] + ADP + H(+). The catalysed reaction is L-threonyl-[protein] + ATP = O-phospho-L-threonyl-[protein] + ADP + H(+). With respect to regulation, activated by multiple phosphorylations on threonine and serine residues. Functionally, serine/threonine kinase that may play a role in mediating the growth-factor and stress induced activation of the transcription factor CREB. The chain is Ribosomal protein S6 kinase alpha-6 (rps6ka6) from Danio rerio (Zebrafish).